The sequence spans 393 residues: Chalcone synthase 1 (393 aa).

C166 is a catalytic residue.

This sequence belongs to the thiolase-like superfamily. Chalcone/stilbene synthases family.

It catalyses the reaction (E)-4-coumaroyl-CoA + 3 malonyl-CoA + 3 H(+) = 2',4,4',6'-tetrahydroxychalcone + 3 CO2 + 4 CoA. The protein operates within secondary metabolite biosynthesis; flavonoid biosynthesis. Its function is as follows. The primary product of this enzyme is 4,2',4',6'-tetrahydroxychalcone (also termed naringenin-chalcone or chalcone) which can under specific conditions spontaneously isomerize into naringenin. The polypeptide is Chalcone synthase 1 (CHS1) (Ruta graveolens (Common rue)).